Reading from the N-terminus, the 89-residue chain is Small ribosomal subunit protein uS14 (89 aa).

The protein belongs to the universal ribosomal protein uS14 family. In terms of assembly, part of the 30S ribosomal subunit. Contacts proteins S3 and S10.

In terms of biological role, binds 16S rRNA, required for the assembly of 30S particles and may also be responsible for determining the conformation of the 16S rRNA at the A site. The protein is Small ribosomal subunit protein uS14 of Chlorobium phaeovibrioides (strain DSM 265 / 1930) (Prosthecochloris vibrioformis (strain DSM 265)).